The following is a 237-amino-acid chain: Ribose-5-phosphate isomerase A (237 aa).

Substrate contacts are provided by residues serine 29–threonine 32, aspartate 86–aspartate 89, and lysine 99–glycine 102. Glutamate 108 functions as the Proton acceptor in the catalytic mechanism. Substrate is bound at residue lysine 126.

It belongs to the ribose 5-phosphate isomerase family. In terms of assembly, homodimer.

It catalyses the reaction aldehydo-D-ribose 5-phosphate = D-ribulose 5-phosphate. The protein operates within carbohydrate degradation; pentose phosphate pathway; D-ribose 5-phosphate from D-ribulose 5-phosphate (non-oxidative stage): step 1/1. Catalyzes the reversible conversion of ribose-5-phosphate to ribulose 5-phosphate. In Prochlorococcus marinus (strain MIT 9312), this protein is Ribose-5-phosphate isomerase A.